Here is a 578-residue protein sequence, read N- to C-terminus: Octopamine receptor 2 (578 aa).

Residues 1 to 84 are Extracellular-facing; the sequence is MMSFPIALFA…YDSITIFITV (84 aa). 4 N-linked (GlcNAc...) asparagine glycosylation sites follow: Asn-13, Asn-38, Asn-46, and Asn-59. Residues 85–107 form a helical membrane-spanning segment; that stretch reads AVVLTLITLWTILGNFFVLMALY. The Cytoplasmic portion of the chain corresponds to 108 to 117; that stretch reads RYGTLRTMSN. The chain crosses the membrane as a helical span at residues 118–139; sequence CLIGNLAISDLLLAVTVLPIST. Residues 140–156 are Extracellular-facing; sequence VHDLLGYWVFGEFTCTL. An intrachain disulfide couples Cys-154 to Cys-239. A helical membrane pass occupies residues 157–177; it reads WLCMDVLYCTASIWGLCTVAF. The Cytoplasmic portion of the chain corresponds to 178–197; it reads DRYLATVYPVWYHDQRSVRK. The chain crosses the membrane as a helical span at residues 198 to 220; sequence AVGCIVFVWIFSIVISFAPFIGW. Residues 221–251 lie on the Extracellular side of the membrane; the sequence is QHMIPSFFSFNASIQRYQCILFTSSSYVLYS. N-linked (GlcNAc...) asparagine glycosylation occurs at Asn-231. The chain crosses the membrane as a helical span at residues 252–272; it reads SMGSFVIPAILMAFMYVRIFV. The Cytoplasmic segment spans residues 273–495; it reads VLHNQSRGVK…ELREQRATKR (223 aa). The chain crosses the membrane as a helical span at residues 496 to 517; it reads MLLIMACFCVCWMPFLFMYILR. The Extracellular portion of the chain corresponds to 518-531; the sequence is SVCDTCHMNQHFVA. A helical transmembrane segment spans residues 532 to 553; the sequence is AIIWLGYVNSSLNPVLYTLFND. Residues 554-578 lie on the Cytoplasmic side of the membrane; sequence DFKVAFKRLIGARSPSAYRSPGPRR.

The protein belongs to the G-protein coupled receptor 1 family.

The protein localises to the cell membrane. Functionally, receptor for octopamine. Octopamine (OA) is a neurotransmitter, neurohormone, and neuromodulator in invertebrates. This receptor induces a long lasting opening of voltage- independent chloride channels, a process which seems to involve protein phosphorylation but does not require either cAPK or PKC. The rank order of potency for agonists is p-synephrine &gt; p-octopamine &gt; xylometazoline &gt; B-HT920 &gt; norepinephrine = clonidine &gt; epinephrine &gt; p-tyramine &gt; phenylephrine = oxymetazoline = mehoxamine = dopamine &gt; serotonin &gt; histamine. For antagonists, the rank order is rauwolscine = mianserin &gt; phentolamine &gt; chlorpromazine &gt; spiperone &gt; yohimbine &gt; propanolol &gt; alprenolol &gt; prazosine &gt; pindolol. The polypeptide is Octopamine receptor 2 (Lymnaea stagnalis (Great pond snail)).